Here is a 308-residue protein sequence, read N- to C-terminus: Ribosomal RNA small subunit methyltransferase H (308 aa).

Residues 32–34, aspartate 52, phenylalanine 78, aspartate 100, and glutamine 107 contribute to the S-adenosyl-L-methionine site; that span reads GGH.

Belongs to the methyltransferase superfamily. RsmH family.

The protein resides in the cytoplasm. It carries out the reaction cytidine(1402) in 16S rRNA + S-adenosyl-L-methionine = N(4)-methylcytidine(1402) in 16S rRNA + S-adenosyl-L-homocysteine + H(+). In terms of biological role, specifically methylates the N4 position of cytidine in position 1402 (C1402) of 16S rRNA. This Legionella pneumophila (strain Paris) protein is Ribosomal RNA small subunit methyltransferase H.